An 80-amino-acid chain; its full sequence is Bowman-Birk type proteinase inhibitor (80 aa).

Disulfide bonds link C19–C70, C20–C35, C23–C66, C25–C33, C41–C47, C44–C59, and C49–C57.

As to quaternary structure, occurs as a monomer, dimer or trimer. The dimer may be the active form. Post-translationally, binds calcium, probably through His-3 to His-6.

Functionally, protease inhibitor with activity against cysteine, aspartic and serine proteases. Highest activity against serine proteases, in particular trypsin and trypsin-like proteases. The sequence is that of Bowman-Birk type proteinase inhibitor from Phaseolus acutifolius (Tepary bean).